A 145-amino-acid polypeptide reads, in one-letter code: Copper transporter 6 (145 aa).

2 helical membrane passes run L47–L67 and Y99–G119.

It belongs to the copper transporter (Ctr) (TC 1.A.56) family. SLC31A subfamily.

It is found in the membrane. Functionally, involved in the transport of copper. This Arabidopsis thaliana (Mouse-ear cress) protein is Copper transporter 6 (COPT6).